A 500-amino-acid polypeptide reads, in one-letter code: Melanopsin-like (500 aa).

Topologically, residues 1 to 65 (MSHHSSWRGH…TVDVPDHAHY (65 aa)) are extracellular. An N-linked (GlcNAc...) asparagine glycan is attached at asparagine 18. Residues 66–86 (IIGSVILIVGITGVIGNALVV) form a helical membrane-spanning segment. The Cytoplasmic segment spans residues 87–101 (YVFCRSRTLRTAGNM). A helical membrane pass occupies residues 102–122 (FIVNLAVADFLMSVTQSPVFF). The Extracellular portion of the chain corresponds to 123–138 (AASLHRRWVFGERPCE). Cysteine 137 and cysteine 215 form a disulfide bridge. Residues 139-159 (LYAFCGALFGICSMMTLTAIA) traverse the membrane as a helical segment. Residues 160–182 (ADRCLAITQPLALVSRVSRRKAG) lie on the Cytoplasmic side of the membrane. The helical transmembrane segment at 183–203 (AVLVVVWLYSLGWSLPPFFGW) threads the bilayer. Topologically, residues 204-232 (SAYVPEGLQTSCSWDYMTFTPSVRAYTIL) are extracellular. Residues 233–253 (LFVFVFFIPLGIIGSCYFAIF) traverse the membrane as a helical segment. The Cytoplasmic segment spans residues 254–286 (QTIRAAGKEIRELDCGETHKVYERMQNEWKMAK). Residues 287-307 (VALVVIVLFIISWSPYSVVAL) traverse the membrane as a helical segment. Topologically, residues 308–322 (TATAGYSHFLTPYMN) are extracellular. A helical membrane pass occupies residues 323 to 343 (SVPAVIAKASAIHNPIIYAIT). Lysine 330 bears the N6-(retinylidene)lysine mark. At 344–500 (HPKYRVAIAR…SDGKALLGGN (157 aa)) the chain is on the cytoplasmic side. Positions 404 to 428 (RWGKTRLSSASDSDSCWTESEADGS) are disordered. Polar residues predominate over residues 409-428 (RLSSASDSDSCWTESEADGS).

Belongs to the G-protein coupled receptor 1 family. Opsin subfamily. As to expression, expressed in a subset of retinal horizontal cells.

It is found in the cell membrane. In terms of biological role, photoreceptor implicated in non-image-forming responses to light. This chain is Melanopsin-like (opn4l), found in Danio rerio (Zebrafish).